We begin with the raw amino-acid sequence, 205 residues long: MRTIDKRIAPNVRLAATLVARAPALTLAYDARCKSRLAATLDTGEDVALVLPRGTVLRDGDVLVADDGALVRVAAAHEAVLLVRAPDALTLTRAAYHLGNRHTPVEVGAGCLKLEYDPVLADMLTRLGATVERASAPFQPEAGAYGGGHRHGHDATFAEDYALAQQVFDEHHGHSHSHDHDHDHDHDHDHQHGPCCSHGHHHGHR.

Residues 171–192 (HHGHSHSHDHDHDHDHDHDHQH) show a composition bias toward basic and acidic residues. Positions 171-205 (HHGHSHSHDHDHDHDHDHDHQHGPCCSHGHHHGHR) are disordered.

Belongs to the UreE family.

The protein localises to the cytoplasm. Functionally, involved in urease metallocenter assembly. Binds nickel. Probably functions as a nickel donor during metallocenter assembly. The chain is Urease accessory protein UreE from Burkholderia pseudomallei (strain K96243).